Reading from the N-terminus, the 137-residue chain is MSSLIRRVISTAKAPGAIGPYSQAVLVDRTIYISGQIGMDPSSGQLVSGGVAEEAKQALKNMGEILKAAGCDFTNVVKTTVLLADINDFNTVNEIYKQYFKSNFPARAAYQVAALPKGSRIEIEAVAIQGPLTTASL.

Ser-2 bears the N-acetylserine mark. An N6-succinyllysine mark is found at Lys-13, Lys-60, and Lys-67. A Phosphothreonine modification is found at Thr-74. Ser-136 carries the phosphoserine modification.

This sequence belongs to the RutC family. As to quaternary structure, homotrimer. Interacts with YTHDF2. Expressed predominantly in liver and kidney. Lower levels in lung and brain.

The protein resides in the cytoplasm. Its subcellular location is the nucleus. The protein localises to the peroxisome. It is found in the mitochondrion. The catalysed reaction is 2-iminobutanoate + H2O = 2-oxobutanoate + NH4(+). The enzyme catalyses 2-iminopropanoate + H2O = pyruvate + NH4(+). Catalyzes the hydrolytic deamination of enamine/imine intermediates that form during the course of normal metabolism. May facilitate the release of ammonia from these potentially toxic reactive metabolites, reducing their impact on cellular components. It may act on enamine/imine intermediates formed by several types of pyridoxal-5'-phosphate-dependent dehydratases including L-threonine dehydratase. Functionally, also promotes endoribonucleolytic cleavage of some transcripts by promoting recruitment of the ribonuclease P/MRP complex. Acts by bridging YTHDF2 and the ribonuclease P/MRP complex. RIDA/HRSP12 binds to N6-methyladenosine (m6A)-containing mRNAs containing a 5'-GGUUC-3' motif: cooperative binding of RIDA/HRSP12 and YTHDF2 to such transcripts lead to recruitment of the ribonuclease P/MRP complex and subsequent endoribonucleolytic cleavage. The protein is 2-iminobutanoate/2-iminopropanoate deaminase of Homo sapiens (Human).